The sequence spans 70 residues: uncharacterized protein (70 aa).

The chain crosses the membrane as a helical span at residues 50 to 70 (INVVLVLIIALIIFILMLDGV).

It is found in the membrane. This is an uncharacterized protein from Dictyostelium discoideum (Social amoeba).